Reading from the N-terminus, the 608-residue chain is Glutamyl-tRNA(Gln) amidotransferase subunit E (608 aa).

This sequence belongs to the GatB/GatE family. GatE subfamily. As to quaternary structure, heterodimer of GatD and GatE.

It carries out the reaction L-glutamyl-tRNA(Gln) + L-glutamine + ATP + H2O = L-glutaminyl-tRNA(Gln) + L-glutamate + ADP + phosphate + H(+). Functionally, allows the formation of correctly charged Gln-tRNA(Gln) through the transamidation of misacylated Glu-tRNA(Gln) in organisms which lack glutaminyl-tRNA synthetase. The reaction takes place in the presence of glutamine and ATP through an activated gamma-phospho-Glu-tRNA(Gln). The GatDE system is specific for glutamate and does not act on aspartate. In Pyrobaculum aerophilum (strain ATCC 51768 / DSM 7523 / JCM 9630 / CIP 104966 / NBRC 100827 / IM2), this protein is Glutamyl-tRNA(Gln) amidotransferase subunit E.